The chain runs to 388 residues: F-box/kelch-repeat protein At3g17530 (388 aa).

The F-box domain maps to 1-50 (MMISDLPHDLESEILSRVPAKSLAKWKTTCKRWYALFRDPSFVKKNFDKA). Kelch repeat units follow at residues 163 to 208 (CCYY…VSLK) and 336 to 383 (RIYI…AEEN).

The protein is F-box/kelch-repeat protein At3g17530 of Arabidopsis thaliana (Mouse-ear cress).